A 33-amino-acid polypeptide reads, in one-letter code: Brevinin 2AV (33 aa).

C27 and C33 are disulfide-bonded.

In terms of tissue distribution, expressed by the skin glands.

It is found in the secreted. In terms of biological role, has antibacterial activity. The polypeptide is Brevinin 2AV (Rana arvalis (Moor frog)).